The following is a 150-amino-acid chain: Arginine repressor (150 aa).

This sequence belongs to the ArgR family.

The protein localises to the cytoplasm. It participates in amino-acid biosynthesis; L-arginine biosynthesis [regulation]. Regulates arginine biosynthesis genes. The protein is Arginine repressor of Clostridium acetobutylicum (strain ATCC 824 / DSM 792 / JCM 1419 / IAM 19013 / LMG 5710 / NBRC 13948 / NRRL B-527 / VKM B-1787 / 2291 / W).